The sequence spans 393 residues: Bifunctional enzyme Fae/Hps (393 aa).

Positions 1–161 are formaldehyde-activating enzyme; it reads MYQIGEALVG…YEKDRGAHAV (161 aa). Catalysis depends on H17, which acts as the Proton donor. Substrate contacts are provided by D19, L48, K66, T68, and Q83. The tract at residues 162 to 393 is 3-hexulose-6-phosphate synthase; the sequence is MGFKVQRLWD…IDQFRVMTDF (232 aa).

This sequence in the N-terminal section; belongs to the formaldehyde-activating enzyme family. In the C-terminal section; belongs to the HPS/KGPDC family. HPS subfamily.

It catalyses the reaction 5,6,7,8-tetrahydromethanopterin + formaldehyde = 5,10-methylenetetrahydromethanopterin + H2O. The enzyme catalyses D-ribulose 5-phosphate + formaldehyde = D-arabino-hex-3-ulose 6-phosphate. It functions in the pathway carbohydrate biosynthesis; D-ribose 5-phosphate biosynthesis. In terms of biological role, catalyzes the condensation of formaldehyde with tetrahydromethanopterin (H(4)MPT) to 5,10-methylenetetrahydromethanopterin. Functionally, catalyzes the reversible formation of ribulose-5-phosphate and formaldehyde from 3-hexulose-6-phosphate. The polypeptide is Bifunctional enzyme Fae/Hps (Methanosphaerula palustris (strain ATCC BAA-1556 / DSM 19958 / E1-9c)).